The primary structure comprises 298 residues: Protein DR_1172 (298 aa).

LEA-like repeat units follow at residues 48-117, 128-197, and 201-270; these read DAAQ…NVGQ, DQAK…DVAQ, and QGAQ…AGKQ. Residues 174–193 are compositionally biased toward basic and acidic residues; the sequence is VQDVKADASKAADQAKDKAQ. The interval 174 to 298 is disordered; it reads VQDVKADASK…MTGNTNTRKN (125 aa). Residues 194 to 208 show a composition bias toward low complexity; that stretch reads DVAQNVKQGAQQAAS. The segment covering 209 to 233 has biased composition (basic and acidic residues); it reads DAKDKVQDVKADASRAADQAKDKAQ. Positions 275–298 are enriched in low complexity; the sequence is GSTTNNAGTAGNTGMTGNTNTRKN.

This sequence belongs to the LEA type 1 family.

This chain is Protein DR_1172, found in Deinococcus radiodurans (strain ATCC 13939 / DSM 20539 / JCM 16871 / CCUG 27074 / LMG 4051 / NBRC 15346 / NCIMB 9279 / VKM B-1422 / R1).